The sequence spans 345 residues: Pectin lyase (345 aa).

The N-terminal stretch at 1-24 (MKRFCLWFAVFSLLLVLLPGKAFG) is a signal peptide. Residue arginine 234 is part of the active site.

This sequence belongs to the polysaccharide lyase 1 family.

It is found in the secreted. The catalysed reaction is Eliminative cleavage of (1-&gt;4)-alpha-D-galacturonan methyl ester to give oligosaccharides with 4-deoxy-6-O-methyl-alpha-D-galact-4-enuronosyl groups at their non-reducing ends.. Inhibited by Hg(2+) and Mn(2+). Not affected by EDTA in vitro. Functionally, catalyzes the depolymerization of pectins of methyl esterification degree from 13 to 75%, with an endo mode of action. Cannot degrade polygalacturonate. Also displays protopectinase activity, i.e. releases pectin from protopectin. The sequence is that of Pectin lyase (pelB) from Bacillus subtilis.